Reading from the N-terminus, the 205-residue chain is Lymphotoxin-alpha (205 aa).

Residues 1–34 form the signal peptide; sequence MTPPERLFLPRVRGTTLHLLLLGLLLVLLPGAQG. O-linked (GalNAc...) threonine glycosylation occurs at threonine 41. Residues 63–205 form the THD domain; the sequence is PAAHLIGDPS…STVFFGAFAL (143 aa). An N-linked (GlcNAc...) asparagine glycan is attached at asparagine 96.

Belongs to the tumor necrosis factor family. As to quaternary structure, homotrimer, and heterotrimer of either two LTB and one LTA subunits or (less prevalent) two LTA and one LTB subunits. Interacts with TNFRSF14.

It is found in the secreted. Its subcellular location is the membrane. Cytokine that in its homotrimeric form binds to TNFRSF1A/TNFR1, TNFRSF1B/TNFBR and TNFRSF14/HVEM. In its heterotrimeric form with LTB binds to TNFRSF3/LTBR. Lymphotoxin is produced by lymphocytes and is cytotoxic for a wide range of tumor cells in vitro and in vivo. The polypeptide is Lymphotoxin-alpha (LTA) (Pan troglodytes (Chimpanzee)).